The sequence spans 253 residues: 2-dehydro-3-deoxy-D-gluconate 5-dehydrogenase (253 aa).

NAD(+) is bound at residue 14-38 (VVTGCDTGLGQGMALGLAQAGCDIV). S145 provides a ligand contact to substrate. The active-site Proton acceptor is the Y158.

Belongs to the short-chain dehydrogenases/reductases (SDR) family. In terms of assembly, homotetramer.

The catalysed reaction is 2-dehydro-3-deoxy-D-gluconate + NAD(+) = 3-deoxy-D-glycero-2,5-hexodiulosonate + NADH + H(+). It carries out the reaction 4-pregnen-20,21-diol-3-one + NAD(+) = 21-hydroxyprogesterone + NADH + H(+). Functionally, catalyzes the reversible reduction of 2,5-diketo-3-deoxygluconate (DKII or 4,6-dihydroxy-2,5-dioxohexanoate) into 2-keto-3-deoxygluconate (KDG or 2-dehydro-3-deoxygluconate) with a concomitant oxidation of NADH. To a lesser extent, can also reduce 5-keto-D-gluconate and oxidize D-gluconate and 1,2-propanediol. Together with KduI, seems to play a role in the catabolism of hexuronates under osmotic stress conditions, substituting for the regular hexuronate degrading enzymes UxaABC and UxuAB whose expression is repressed in these conditions. In vitro, also exhibits NADH-dependent 20-ketosteroid reductase activity against eukaryotic steroid hormone 11-deoxycorticosterone (11-DOC), which is converted into the product 4-pregnen-20,21-diol-3-one. In addition to 11-DOC, five other C21 steroid compounds (11-deoxycortisol, cortisol, corticosterone, cortisone, and 21-hydroxypregnenolone) are reduced by KduD, but steroids lacking the hydroxyl group at C21 position, such as pregnenolone, testosterone propionate, cortisone acetate, or progesterone, cannot be used as substrate. In Escherichia coli (strain K12), this protein is 2-dehydro-3-deoxy-D-gluconate 5-dehydrogenase.